Reading from the N-terminus, the 197-residue chain is MTFLIASNILLWIAFLGVTVVMLGLMRQVGLLHERSSPMGAMITDHGPDIGDMAPEFDLPDYFGRSVHIGGASERPTLLMFTAPTCPVCDKLFPIIKSIARAEKIGVVMISDGAPEEHARFLKNHELGQIRYVVSAEIGMAFQVGKIPYGVLVDGEGVIRAKGLTNTREHLESLLEADKTGFASLQQFMASRKKNAA.

A helical transmembrane segment spans residues phenylalanine 3 to leucine 23. The Thioredoxin domain occupies proline 48–threonine 180.

It is found in the membrane. The protein operates within one-carbon metabolism; methylamine degradation. May be specifically involved in the processing, transport, and/or maturation of the MADH beta-subunit. This chain is Methylamine utilization protein MauD (mauD), found in Paracoccus versutus (Thiobacillus versutus).